The following is a 595-amino-acid chain: Probable serine/threonine-protein kinase KIN1 homolog (595 aa).

The 250-residue stretch at 67-316 (YKLIKTLGKG…LENVKKSKWT (250 aa)) folds into the Protein kinase domain. Residues 73–81 (LGKGSCAKV) and K96 each bind ATP. Catalysis depends on D188, which acts as the Proton acceptor.

The protein belongs to the protein kinase superfamily. CAMK Ser/Thr protein kinase family. NIM1 subfamily.

It localises to the cytoplasm. The protein resides in the cell membrane. The catalysed reaction is L-seryl-[protein] + ATP = O-phospho-L-seryl-[protein] + ADP + H(+). It carries out the reaction L-threonyl-[protein] + ATP = O-phospho-L-threonyl-[protein] + ADP + H(+). Its function is as follows. Serine/threonine protein kinase involved in regulation of exocytosis. The sequence is that of Probable serine/threonine-protein kinase KIN1 homolog (KIN1) from Enterocytozoon bieneusi (strain H348) (Microsporidian parasite).